The primary structure comprises 404 residues: Propionate kinase (404 aa).

The protein belongs to the acetokinase family. PduW subfamily.

It localises to the cytoplasm. The catalysed reaction is propanoate + ATP = propanoyl phosphate + ADP. It functions in the pathway polyol metabolism; 1,2-propanediol degradation. In terms of biological role, works with phosphate acetyltransferase (pta) to capture exogenous propionate and regenerate propionyl-CoA during degradation of 1,2-propanediol (1,2-PD). This is Propionate kinase from Klebsiella pneumoniae subsp. pneumoniae (strain ATCC 700721 / MGH 78578).